Here is a 161-residue protein sequence, read N- to C-terminus: Phosphopantetheine adenylyltransferase (161 aa).

Substrate is bound at residue S11. ATP-binding positions include 11 to 12 (SF) and H19. The substrate site is built by K43, L75, and R89. ATP is bound by residues 90-92 (GLR), E100, and 125-131 (YSFISSS).

This sequence belongs to the bacterial CoaD family. In terms of assembly, homohexamer. It depends on Mg(2+) as a cofactor.

The protein resides in the cytoplasm. It carries out the reaction (R)-4'-phosphopantetheine + ATP + H(+) = 3'-dephospho-CoA + diphosphate. The protein operates within cofactor biosynthesis; coenzyme A biosynthesis; CoA from (R)-pantothenate: step 4/5. Reversibly transfers an adenylyl group from ATP to 4'-phosphopantetheine, yielding dephospho-CoA (dPCoA) and pyrophosphate. The polypeptide is Phosphopantetheine adenylyltransferase (Staphylococcus epidermidis (strain ATCC 35984 / DSM 28319 / BCRC 17069 / CCUG 31568 / BM 3577 / RP62A)).